A 148-amino-acid chain; its full sequence is MSEPIKLHDLRPAAGSNKAKTRVGRGEASKGKTAGRGTKGTKARKQVSAAFEGGQMPLQMRLPKLKGFKNPNKVDYQVVNIADLAEKFPQGGDVSIADIVAAGLVRKNELVKVLGNGDISVKLNVTANKFSGSAKEKIEAAGGSATVA.

Basic and acidic residues predominate over residues 1 to 11; sequence MSEPIKLHDLR. The tract at residues 1–52 is disordered; that stretch reads MSEPIKLHDLRPAAGSNKAKTRVGRGEASKGKTAGRGTKGTKARKQVSAAFE.

The protein belongs to the universal ribosomal protein uL15 family. As to quaternary structure, part of the 50S ribosomal subunit.

In terms of biological role, binds to the 23S rRNA. This Corynebacterium glutamicum (strain R) protein is Large ribosomal subunit protein uL15.